The sequence spans 181 residues: Endoribonuclease YbeY (181 aa).

The Zn(2+) site is built by H115, H119, and H125.

It belongs to the endoribonuclease YbeY family. The cofactor is Zn(2+).

Its subcellular location is the cytoplasm. Its function is as follows. Single strand-specific metallo-endoribonuclease involved in late-stage 70S ribosome quality control and in maturation of the 3' terminus of the 16S rRNA. In Bifidobacterium animalis subsp. lactis (strain AD011), this protein is Endoribonuclease YbeY.